Here is a 234-residue protein sequence, read N- to C-terminus: Large ribosomal subunit protein uL1 (234 aa).

It belongs to the universal ribosomal protein uL1 family. As to quaternary structure, part of the 50S ribosomal subunit.

Its function is as follows. Binds directly to 23S rRNA. The L1 stalk is quite mobile in the ribosome, and is involved in E site tRNA release. Protein L1 is also a translational repressor protein, it controls the translation of the L11 operon by binding to its mRNA. This is Large ribosomal subunit protein uL1 from Bdellovibrio bacteriovorus (strain ATCC 15356 / DSM 50701 / NCIMB 9529 / HD100).